A 676-amino-acid chain; its full sequence is ATP-dependent zinc metalloprotease FTSH 2, chloroplastic (676 aa).

The transit peptide at 1 to 32 directs the protein to the chloroplast; it reads MAPTSMSLAAKTPLPFSTLPSSGVAQRPVSVT. A helical membrane pass occupies residues 155–175; the sequence is LLFNLIGNLAFPLILIGGLFL. ATP is bound at residue 254 to 261; sequence GPPGTGKT. Zn(2+) is bound at residue His-475. The active site involves Glu-476. Zn(2+) contacts are provided by His-479 and Asp-553.

This sequence in the N-terminal section; belongs to the AAA ATPase family. The protein in the C-terminal section; belongs to the peptidase M41 family. Zn(2+) serves as cofactor.

Its subcellular location is the plastid. It localises to the chloroplast thylakoid membrane. Probable ATP-dependent zinc metallopeptidase. This Oryza sativa subsp. japonica (Rice) protein is ATP-dependent zinc metalloprotease FTSH 2, chloroplastic (FTSH2).